We begin with the raw amino-acid sequence, 674 residues long: MDTPQKSITQIGTPISKSRFEDSPVFNYINSLSPIRPVRSIPNPNQFSSLNFTSPPSVFTSPHLTSSHKESRFFKTHNSSSSDPTNSVESQEDESTSHEEVPAEGEDTKGLNIDDCMREEASVETNLDDSVASPCGGNTTDLSLVPYAPTRGEDGSCEDNGMELQKMHDNVQGKTETPDWESLIADASELLIFDSPDASEAFRCFMMQRASNSEARFRNGVEKQTMQHDSNKEPESANAIPYEAVSLLHRGIRRRCLDFEMPGNKQTSSENNTAACESSSRCVVPSIGLHLNAILMSSKDCKTNVTQDYSCSANIQVGLQRSISTLQDSLDQTENEIREDADQDVPVEPALQELNLSSPKKKRVKLDSGEGESCKRCNCKKSKCLKLYCECFAAGVYCIEPCSCIDCFNKPIHEDVVLATRKQIESRNPLAFAPKVIRNSDSVQETGDDASKTPASARHKRGCNCKKSNCLKKYCECYQGGVGCSINCRCEGCKNAFGRKDGSSIDMEAEQEEENETSEKSRTAKSQQNTEVLMRKDMSSALPTTPTPIYRPELVQLPFSSSKNRMPPPQSLLGGGSSSGIFNSQYLRKPDISLSQSRIEKSFETVAVDGAEQMPEILIHSPIPNIKSVSPNGKRVSPPHMESSSSGSILGRRNGGRKLILQSIPSFPSLTPQH.

Composition is skewed to polar residues over residues 1–16 (MDTP…TPIS) and 76–89 (THNS…NSVE). Disordered stretches follow at residues 1–20 (MDTP…KSRF) and 69–113 (KESR…GLNI). Basic and acidic residues predominate over residues 95-109 (STSHEEVPAEGEDTK). Residues 373–498 (SCKRCNCKKS…RCEGCKNAFG (126 aa)) enclose the CRC domain. 2 disordered regions span residues 504-529 (SIDM…SQQN) and 623-655 (IPNI…RRNG). Positions 507 to 516 (MEAEQEEENE) are enriched in acidic residues.

The protein belongs to the lin-54 family. In terms of tissue distribution, ubiquitous but expressed mostly in all the aerial organs with highest expression in flowers.

The protein resides in the nucleus. Its function is as follows. Plays a role in development of both male and female reproductive tissues. The protein is Protein tesmin/TSO1-like CXC 2 (TCX2) of Arabidopsis thaliana (Mouse-ear cress).